A 37-amino-acid polypeptide reads, in one-letter code: Large ribosomal subunit protein bL36 (37 aa).

Belongs to the bacterial ribosomal protein bL36 family.

The sequence is that of Large ribosomal subunit protein bL36 from Synechococcus sp. (strain CC9311).